Consider the following 177-residue polypeptide: MIRINSRGLTVSTRRFQTLSKIGSTLKTKEDIRNALNSPVWSLKELISSNEKDMKSVEVSAKTINKVLKLSAFDTNITAEQEKSLVSALSAQMVFIKHLYENDEKSDSVVEENDTHFRLIASDHNPGEPLTLKQLLAQIEELPEKVDPAKGETQGSFNVANMNPRNRPFATIRSKQG.

A mitochondrion-targeting transit peptide spans 1–16 (MIRINSRGLTVSTRRF). Residues 148 to 177 (PAKGETQGSFNVANMNPRNRPFATIRSKQG) are disordered. Over residues 153 to 164 (TQGSFNVANMNP) the composition is skewed to polar residues.

It belongs to the GatF family. In terms of assembly, subunit of the heterotrimeric GatFAB amidotransferase (AdT) complex, composed of A, B and F subunits.

The protein localises to the mitochondrion inner membrane. It catalyses the reaction L-glutamyl-tRNA(Gln) + L-glutamine + ATP + H2O = L-glutaminyl-tRNA(Gln) + L-glutamate + ADP + phosphate + H(+). Its function is as follows. Allows the formation of correctly charged Gln-tRNA(Gln) through the transamidation of misacylated Glu-tRNA(Gln) in the mitochondria. The reaction takes place in the presence of glutamine and ATP through an activated gamma-phospho-Glu-tRNA(Gln). Required for proper protein synthesis within the mitochondrion. This chain is Glutamyl-tRNA(Gln) amidotransferase subunit F, mitochondrial, found in Scheffersomyces stipitis (strain ATCC 58785 / CBS 6054 / NBRC 10063 / NRRL Y-11545) (Yeast).